Reading from the N-terminus, the 83-residue chain is DNA-directed RNA polymerase subunit omega (83 aa).

This sequence belongs to the RNA polymerase subunit omega family. The RNAP catalytic core consists of 2 alpha, 1 beta, 1 beta' and 1 omega subunit. When a sigma factor is associated with the core the holoenzyme is formed, which can initiate transcription.

The catalysed reaction is RNA(n) + a ribonucleoside 5'-triphosphate = RNA(n+1) + diphosphate. In terms of biological role, promotes RNA polymerase assembly. Latches the N- and C-terminal regions of the beta' subunit thereby facilitating its interaction with the beta and alpha subunits. In Chromohalobacter salexigens (strain ATCC BAA-138 / DSM 3043 / CIP 106854 / NCIMB 13768 / 1H11), this protein is DNA-directed RNA polymerase subunit omega.